A 426-amino-acid chain; its full sequence is Protein prenyltransferase alpha subunit repeat-containing protein 1 (426 aa).

4 PFTA repeats span residues 86 to 119, 121 to 154, 180 to 213, and 219 to 252; these read ALVD…VLNP, KDLY…QKEC, EEMR…AKGN, and DELS…AKEL. A disordered region spans residues 255-279; that stretch reads AAEKDVHTSQQPNGENTATASDDNH. Positions 262 to 275 are enriched in polar residues; that stretch reads TSQQPNGENTATAS. The stretch at 290-323 is one PFTA 5 repeat; the sequence is EEIQLCTDLIESYPGHETLWCHRRHVFYLWHQWR.

This sequence belongs to the protein prenyltransferase subunit alpha family.

The chain is Protein prenyltransferase alpha subunit repeat-containing protein 1 (ptar1) from Danio rerio (Zebrafish).